The sequence spans 300 residues: Actin-related protein 2/3 complex subunit 2-B (300 aa).

It belongs to the ARPC2 family. As to quaternary structure, component of the Arp2/3 complex composed of actr2/arp2, actr3/arp3, arpc1 (arpc1a or arpc1b), arpc2, arpc3, arpc4 and arpc5.

It localises to the cytoplasm. The protein localises to the cytoskeleton. Its subcellular location is the cell projection. The protein resides in the nucleus. In terms of biological role, actin-binding component of the Arp2/3 complex, a multiprotein complex that mediates actin polymerization upon stimulation by nucleation-promoting factor (NPF). The Arp2/3 complex mediates the formation of branched actin networks in the cytoplasm, providing the force for cell motility. In addition to its role in the cytoplasmic cytoskeleton, the Arp2/3 complex also promotes actin polymerization in the nucleus, thereby regulating gene transcription and repair of damaged DNA. The Arp2/3 complex promotes homologous recombination (HR) repair in response to DNA damage by promoting nuclear actin polymerization, leading to drive motility of double-strand breaks (DSBs). The sequence is that of Actin-related protein 2/3 complex subunit 2-B (arpc2-b) from Xenopus laevis (African clawed frog).